The primary structure comprises 251 residues: Small ribosomal subunit protein uS4c (251 aa).

S4 RNA-binding domains lie at 110–170 and 189–251; these read MRLD…KLVN and RTLA…QFSE.

Belongs to the universal ribosomal protein uS4 family. Part of the 30S ribosomal subunit. Contacts protein S5. The interaction surface between S4 and S5 is involved in control of translational fidelity.

It is found in the plastid. The protein resides in the chloroplast. Functionally, one of the primary rRNA binding proteins, it binds directly to 16S rRNA where it nucleates assembly of the body of the 30S subunit. In terms of biological role, with S5 and S12 plays an important role in translational accuracy. The protein is Small ribosomal subunit protein uS4c (rps4) of Tetradesmus obliquus (Green alga).